Reading from the N-terminus, the 138-residue chain is MSHLTMIKTLNLRPFHSASALRKIVITSILGVAVTMSGCSLLSVYKIDLPQGTPITQTQAQKLQVGMNQNQVLYILGSPAIRDTLEPNRWDYIYDYQAGTEARRKGIADVKNASQHLKVYFDNNGIVTGIQGLESLPK.

Positions 1–42 (MSHLTMIKTLNLRPFHSASALRKIVITSILGVAVTMSGCSLL) are cleaved as a signal peptide.

The protein belongs to the BamE family. As to quaternary structure, part of the Bam complex.

Its subcellular location is the cell outer membrane. Functionally, part of the outer membrane protein assembly complex, which is involved in assembly and insertion of beta-barrel proteins into the outer membrane. This Psychrobacter arcticus (strain DSM 17307 / VKM B-2377 / 273-4) protein is Outer membrane protein assembly factor BamE.